A 409-amino-acid chain; its full sequence is Argininosuccinate synthase (409 aa).

ATP-binding positions include 12–20 (AYSGGLDTS) and A39. L-citrulline is bound at residue Y91. Residue G121 participates in ATP binding. L-aspartate contacts are provided by T123, N127, and D128. An L-citrulline-binding site is contributed by N127. Residues R131, S180, S189, E265, and Y277 each contribute to the L-citrulline site.

Belongs to the argininosuccinate synthase family. Type 1 subfamily. In terms of assembly, homotetramer.

The protein localises to the cytoplasm. The catalysed reaction is L-citrulline + L-aspartate + ATP = 2-(N(omega)-L-arginino)succinate + AMP + diphosphate + H(+). It functions in the pathway amino-acid biosynthesis; L-arginine biosynthesis; L-arginine from L-ornithine and carbamoyl phosphate: step 2/3. In Buchnera aphidicola subsp. Baizongia pistaciae (strain Bp), this protein is Argininosuccinate synthase.